Consider the following 660-residue polypeptide: Solute carrier family 5 member 4B (660 aa).

Residues 1-27 lie on the Cytoplasmic side of the membrane; it reads MASTLSPSITPQTEEPPVVPVRIQNAA. Residues 28–48 form a helical membrane-spanning segment; sequence DISVIVIYFIVVLAVGLWSMV. Residues 49-54 are Extracellular-facing; that stretch reads RSNRGT. Residues 55–75 traverse the membrane as a helical segment; it reads VGGFFLAGHDMAWWPMGASLF. Residues 76-82 are Cytoplasmic-facing; the sequence is ASNIGSN. A helical membrane pass occupies residues 83-103; that stretch reads HFVGLAGTGAASGIAIAAVEW. At 104 to 105 the chain is on the extracellular side; that stretch reads NA. The helical transmembrane segment at 106-126 threads the bilayer; the sequence is LLMVLVLGWVFLPIYIKAGVL. Residues 127-142 are Cytoplasmic-facing; the sequence is TMPEYLRKRFGGKRLQ. A helical membrane pass occupies residues 143 to 163; it reads IYLSVLSLFIMVALQTSSIIF. Residues 164–166 lie on the Extracellular side of the membrane; sequence SGA. The chain crosses the membrane as a helical span at residues 167–187; that stretch reads IFIQLALGLNLYLAVFILLAI. The Cytoplasmic portion of the chain corresponds to 188–208; it reads TAFYTVAGGLASVIYTDSVQT. A helical membrane pass occupies residues 209 to 229; the sequence is FIMLLGSLILMGFAFAEVGGY. The Extracellular portion of the chain corresponds to 230-277; the sequence is ESFTEKYMNAIPSVVEGDNLTISPKCYTPQPDSFHVFRDPVTGDIPWP. A helical membrane pass occupies residues 278 to 298; the sequence is GLIFGMTILAIWYWCADQVIV. Over 299 to 313 the chain is Cytoplasmic; that stretch reads QRCLCGKNMSHVKAA. Residues 314–334 traverse the membrane as a helical segment; it reads CILCGYLKLLPMFLMVMPGMI. The Extracellular segment spans residues 335-380; that stretch reads SRILYTDKVACVVPSECEKQCGTAVGCTNYAYPTLVLELMPDGLRG. The chain crosses the membrane as a helical span at residues 381–401; sequence LMLSVMLASLMSSLTSIFNSA. At 402–423 the chain is on the cytoplasmic side; sequence STLFTIDLYTKIRKKASERELM. The helical transmembrane segment at 424 to 444 threads the bilayer; sequence IAGRIFGMVLIAVSILWVPLV. The Extracellular portion of the chain corresponds to 445–455; sequence QVSQNGQLFHY. A helical transmembrane segment spans residues 456-476; sequence IGSVSSYLGPPLGAVFMLAIF. The Cytoplasmic segment spans residues 477–484; it reads FKRVNEQG. The chain crosses the membrane as a helical span at residues 485 to 505; that stretch reads AFWGLMVGLVVGLIRLIAEFV. Over 506–526 the chain is Extracellular; that stretch reads YGTGSCVAPSNCPKIICGVHY. Residues 527–547 traverse the membrane as a helical segment; it reads MYFAIILFFVSIIVILGVSFL. At 548-639 the chain is on the cytoplasmic side; the sequence is TEPIPDVHLY…DTSEKPLWRT (92 aa). Residues 640–660 traverse the membrane as a helical segment; that stretch reads VMNINAVLLLGVAVFVHAYFA.

Belongs to the sodium:solute symporter (SSF) (TC 2.A.21) family. Expressed in small intestine. Expressed in kidney.

The protein resides in the cell membrane. The enzyme catalyses D-glucose(out) + 2 Na(+)(out) = D-glucose(in) + 2 Na(+)(in). Its activity is regulated as follows. Inhibited by phlorizin. In terms of biological role, low-affinity sodium/D-glucose symporter. Generates D-glucose-induced depolarization in a pH-independent manner. This is Solute carrier family 5 member 4B from Mus musculus (Mouse).